A 317-amino-acid polypeptide reads, in one-letter code: Putative ribose-phosphate pyrophosphokinase (317 aa).

The segment at 211-224 (GRDVIVLDDEIAKG) is binding of phosphoribosylpyrophosphate.

It belongs to the ribose-phosphate pyrophosphokinase family.

The catalysed reaction is D-ribose 5-phosphate + ATP = 5-phospho-alpha-D-ribose 1-diphosphate + AMP + H(+). The sequence is that of Putative ribose-phosphate pyrophosphokinase from Streptomyces coelicolor (strain ATCC BAA-471 / A3(2) / M145).